We begin with the raw amino-acid sequence, 397 residues long: Phosphoglycerate kinase (397 aa).

Residues D21–N23, R37, H60–R63, R119, and R152 each bind substrate. ATP is bound by residues K202, G294, E325, and G351 to S354.

This sequence belongs to the phosphoglycerate kinase family. As to quaternary structure, monomer.

The protein localises to the cytoplasm. It carries out the reaction (2R)-3-phosphoglycerate + ATP = (2R)-3-phospho-glyceroyl phosphate + ADP. The protein operates within carbohydrate degradation; glycolysis; pyruvate from D-glyceraldehyde 3-phosphate: step 2/5. This chain is Phosphoglycerate kinase, found in Pseudothermotoga lettingae (strain ATCC BAA-301 / DSM 14385 / NBRC 107922 / TMO) (Thermotoga lettingae).